Reading from the N-terminus, the 378-residue chain is 1-acyl-sn-glycerol-3-phosphate acyltransferase delta (378 aa).

A helical transmembrane segment spans residues 11-31 (FLCHLVFCYVFIASGLIINTI). Positions 96-101 (HKFEID) match the HXXXXD motif motif. 3 helical membrane-spanning segments follow: residues 125–145 (ELAYVPIIGWMWYFTEMVFCS), 307–327 (TLVNWLFWASLVLYPFFQFLV), and 338–358 (LASFILVFFVASVGVRWMIGV).

Belongs to the 1-acyl-sn-glycerol-3-phosphate acyltransferase family.

It localises to the endoplasmic reticulum membrane. The catalysed reaction is a 1-acyl-sn-glycero-3-phosphate + an acyl-CoA = a 1,2-diacyl-sn-glycero-3-phosphate + CoA. The enzyme catalyses (4Z,7Z,10Z,13Z,16Z,19Z)-docosahexaenoyl-CoA + 1-hexadecanoyl-sn-glycero-3-phosphate = 1-hexadecanoyl-2-(4Z,7Z,10Z,13Z,16Z,19Z-docosahexaenoyl)-sn-glycero-3-phosphate + CoA. It carries out the reaction 1-octadecanoyl-sn-glycero-3-phosphate + (9Z,12Z)-octadecadienoyl-CoA = 1-octadecanoyl-2-(9Z,12Z-octadecadienoyl)-sn-glycero-3-phosphate + CoA. It catalyses the reaction 1-octadecanoyl-sn-glycero-3-phosphate + (4Z,7Z,10Z,13Z,16Z,19Z)-docosahexaenoyl-CoA = 1-octadecanoyl-2-(4Z,7Z,10Z,13Z,16Z,19Z-docosahexaenoyl)-sn-glycero-3-phosphate + CoA. The catalysed reaction is (4Z,7Z,10Z,13Z,16Z,19Z)-docosahexaenoyl-CoA + 1-(9Z-octadecenoyl)-sn-glycero-3-phosphate = 1-(9Z-octadecenoyl)-2-(4Z,7Z,10Z,13Z,16Z,19Z-docosahexaenoyl)-sn-glycero-3-phosphate + CoA. Its pathway is phospholipid metabolism; CDP-diacylglycerol biosynthesis; CDP-diacylglycerol from sn-glycerol 3-phosphate: step 2/3. In terms of biological role, converts 1-acyl-sn-glycerol-3-phosphate (lysophosphatidic acid or LPA) into 1,2-diacyl-sn-glycerol-3-phosphate (phosphatidic acid or PA) by incorporating an acyl moiety at the sn-2 position of the glycerol backbone. Exhibits high acyl-CoA specificity for polyunsaturated fatty acyl-CoA, especially docosahexaenoyl-CoA (22:6-CoA, DHA-CoA). The chain is 1-acyl-sn-glycerol-3-phosphate acyltransferase delta (AGPAT4) from Pongo abelii (Sumatran orangutan).